The primary structure comprises 797 residues: Probable DNA polymerase (797 aa).

The protein belongs to the DNA polymerase type-B family.

It is found in the mitochondrion. It catalyses the reaction DNA(n) + a 2'-deoxyribonucleoside 5'-triphosphate = DNA(n+1) + diphosphate. The chain is Probable DNA polymerase from Agaricus bitorquis (Pavement mushroom).